A 355-amino-acid polypeptide reads, in one-letter code: Probable nitronate monooxygenase (355 aa).

FMN contacts are provided by residues asparagine 71, glutamine 175, glycine 180, glycine 218, and 237-240 (QMGT).

This sequence belongs to the nitronate monooxygenase family. NMO class I subfamily. Requires FMN as cofactor.

The catalysed reaction is 3 propionate 3-nitronate + 3 O2 + H2O = 3 3-oxopropanoate + 2 nitrate + nitrite + H2O2 + 3 H(+). In terms of biological role, nitronate monooxygenase that uses molecular oxygen to catalyze the oxidative denitrification of alkyl nitronates. Acts on propionate 3-nitronate (P3N), the presumed physiological substrate. Probably functions in the detoxification of P3N, a metabolic poison produced by plants and fungi as a defense mechanism. This is Probable nitronate monooxygenase from Staphylococcus aureus (strain JH1).